A 149-amino-acid chain; its full sequence is Nucleoside diphosphate kinase (149 aa).

ATP contacts are provided by Lys9, Phe57, Arg85, Thr91, Arg102, and Asn112. His115 functions as the Pros-phosphohistidine intermediate in the catalytic mechanism.

This sequence belongs to the NDK family. In terms of assembly, homotetramer. The cofactor is Mg(2+).

The protein resides in the cytoplasm. The enzyme catalyses a 2'-deoxyribonucleoside 5'-diphosphate + ATP = a 2'-deoxyribonucleoside 5'-triphosphate + ADP. It catalyses the reaction a ribonucleoside 5'-diphosphate + ATP = a ribonucleoside 5'-triphosphate + ADP. In terms of biological role, major role in the synthesis of nucleoside triphosphates other than ATP. The ATP gamma phosphate is transferred to the NDP beta phosphate via a ping-pong mechanism, using a phosphorylated active-site intermediate. This chain is Nucleoside diphosphate kinase, found in Desulfitobacterium hafniense (strain DSM 10664 / DCB-2).